The primary structure comprises 309 residues: ADP,ATP carrier protein 1 (309 aa).

Solcar repeat units follow at residues 11-104 (SHFG…IKSL), 116-208 (KWFA…FKPV), and 216-302 (GSFV…LQLI). Transmembrane regions (helical) follow at residues 13-40 (FGVD…VKLL), 81-105 (TANV…KSLL), 114-134 (YAKW…LSLL), 184-205 (FVPS…YDSF), and 219-239 (VASF…SYPL). ADP contacts are provided by arginine 86 and lysine 98. Arginine 243 contributes to the ADP binding site. The important for transport activity stretch occupies residues 243–248 (RRRMMM). The Nucleotide carrier signature motif motif lies at 243-248 (RRRMMM). A helical transmembrane segment spans residues 279 to 299 (CGANIFRGVAAAGVISLYDQL).

The protein belongs to the mitochondrial carrier (TC 2.A.29) family. As to quaternary structure, monomer.

The protein resides in the mitochondrion inner membrane. The enzyme catalyses ADP(in) + ATP(out) = ADP(out) + ATP(in). With respect to regulation, the matrix-open state (m-state) is inhibited by the membrane-permeable bongkrekic acid (BKA). The cytoplasmic-open state (c-state) is inhibited by the membrane-impermeable toxic inhibitor carboxyatractyloside (CATR). ADP:ATP antiporter that mediates import of ADP into the mitochondrial matrix for ATP synthesis, and export of ATP out to fuel the cell. Cycles between the cytoplasmic-open state (c-state) and the matrix-open state (m-state): operates by the alternating access mechanism with a single substrate-binding site intermittently exposed to either the cytosolic (c-state) or matrix (m-state) side of the inner mitochondrial membrane. The chain is ADP,ATP carrier protein 1 (AAC1) from Saccharomyces cerevisiae (strain ATCC 204508 / S288c) (Baker's yeast).